The chain runs to 297 residues: 3-methyl-2-oxobutanoate hydroxymethyltransferase (297 aa).

Residues 1 to 12 (MSEQISEQSEQN) show a composition bias toward polar residues. Residues 1 to 36 (MSEQISEQSEQNVYGACPPVPAGESSPSAASAPRTK) form a disordered region. The segment covering 22–33 (AGESSPSAASAP) has biased composition (low complexity). Residues aspartate 78 and aspartate 117 each contribute to the Mg(2+) site. Residues 78–79 (DS), aspartate 117, and lysine 147 contribute to the 3-methyl-2-oxobutanoate site. Glutamate 149 is a Mg(2+) binding site. The active-site Proton acceptor is glutamate 215.

The protein belongs to the PanB family. Homodecamer; pentamer of dimers. Mg(2+) serves as cofactor.

It is found in the cytoplasm. It catalyses the reaction 3-methyl-2-oxobutanoate + (6R)-5,10-methylene-5,6,7,8-tetrahydrofolate + H2O = 2-dehydropantoate + (6S)-5,6,7,8-tetrahydrofolate. It participates in cofactor biosynthesis; (R)-pantothenate biosynthesis; (R)-pantoate from 3-methyl-2-oxobutanoate: step 1/2. Catalyzes the reversible reaction in which hydroxymethyl group from 5,10-methylenetetrahydrofolate is transferred onto alpha-ketoisovalerate to form ketopantoate. This Mycobacterium ulcerans (strain Agy99) protein is 3-methyl-2-oxobutanoate hydroxymethyltransferase.